The chain runs to 663 residues: UvrABC system protein B (663 aa).

One can recognise a Helicase ATP-binding domain in the interval 30-417 (EGIKAGKRHQ…TDKMVEQIIR (388 aa)). 43 to 50 (GATGTGKT) is a binding site for ATP. The Beta-hairpin motif lies at 96–119 (YYDYYQPEAYVPSTDTFIEKDASI). Residues 434 to 600 (QIDDLLSEIQ…TINKKIHDLI (167 aa)) form the Helicase C-terminal domain. Residues 627–662 (QKTIDNIEKEMKQAAKDLDFEKATELRDMLFELKAE) enclose the UVR domain.

Belongs to the UvrB family. As to quaternary structure, forms a heterotetramer with UvrA during the search for lesions. Interacts with UvrC in an incision complex.

It is found in the cytoplasm. Its function is as follows. The UvrABC repair system catalyzes the recognition and processing of DNA lesions. A damage recognition complex composed of 2 UvrA and 2 UvrB subunits scans DNA for abnormalities. Upon binding of the UvrA(2)B(2) complex to a putative damaged site, the DNA wraps around one UvrB monomer. DNA wrap is dependent on ATP binding by UvrB and probably causes local melting of the DNA helix, facilitating insertion of UvrB beta-hairpin between the DNA strands. Then UvrB probes one DNA strand for the presence of a lesion. If a lesion is found the UvrA subunits dissociate and the UvrB-DNA preincision complex is formed. This complex is subsequently bound by UvrC and the second UvrB is released. If no lesion is found, the DNA wraps around the other UvrB subunit that will check the other stand for damage. The polypeptide is UvrABC system protein B (Staphylococcus aureus (strain COL)).